We begin with the raw amino-acid sequence, 255 residues long: MAELRALVAVKRVIDYAVKIRVKPDRTGVVTDGVKHSMNPFCEIAVEEAVRLKEKKLVKEVIAVSCGPAQCQETIRTALAMGADRGIHVEVPPAEAERLGPLQVARVLAKLAEKEKVDLVLLGKQAIDDDCNQTGQMTAGFLDWPQGTFASQVTLEGDKLKVEREIDGGLETLRLKLPAVVTADLRLNEPRYATLPNIMKAKKKKIEVIKPGDLGVDLTSKLSVISVEDPPQRTAGVKVETTEDLVAKLKEIGRI.

A2 is modified (N-acetylalanine). Residues A9, 39 to 42 (NPFC), C66, and 123 to 134 (GKQAIDDDCNQT) contribute to the AMP site. Residues 183-205 (ADLRLNEPRYATLPNIMKAKKKK) are recognition loop. Residue K200 is modified to N6,N6,N6-trimethyllysine; by ETFBKMT; alternate. K200 carries the N6-acetyllysine; alternate modification. N6-methyllysine; alternate is present on K200. K203 bears the N6,N6,N6-trimethyllysine; by ETFBKMT mark. Position 210 is an N6-acetyllysine; alternate (K210). Residue K210 is modified to N6-succinyllysine; alternate. Phosphoserine is present on residues S223 and S226. K238 bears the N6-acetyllysine mark. The residue at position 248 (K248) is an N6-acetyllysine; alternate. K248 carries the post-translational modification N6-succinyllysine; alternate.

The protein belongs to the ETF beta-subunit/FixA family. Heterodimer composed of ETFA and ETFB. Identified in a complex that contains ETFA, ETFB and ETFRF1. Interacts with ACADM. Post-translationally, methylated. Trimethylation at Lys-200 and Lys-203 may negatively regulate the activity in electron transfer from acyl-CoA dehydrogenases.

It localises to the mitochondrion matrix. Heterodimeric electron transfer flavoprotein that accepts electrons from several mitochondrial dehydrogenases, including acyl-CoA dehydrogenases, glutaryl-CoA and sarcosine dehydrogenase. It transfers the electrons to the main mitochondrial respiratory chain via ETF-ubiquinone oxidoreductase. Required for normal mitochondrial fatty acid oxidation and normal amino acid metabolism. ETFB binds an AMP molecule that probably has a purely structural role. This Pongo abelii (Sumatran orangutan) protein is Electron transfer flavoprotein subunit beta.